Here is a 168-residue protein sequence, read N- to C-terminus: Photosystem I assembly protein Ycf3 (168 aa).

TPR repeat units lie at residues 35 to 68 (AFTY…EIDP), 72 to 105 (SYIL…NPFL), and 120 to 153 (GEQA…TPGN).

Belongs to the Ycf3 family.

Its subcellular location is the plastid. The protein resides in the chloroplast thylakoid membrane. Essential for the assembly of the photosystem I (PSI) complex. May act as a chaperone-like factor to guide the assembly of the PSI subunits. The polypeptide is Photosystem I assembly protein Ycf3 (Nandina domestica (Heavenly bamboo)).